The sequence spans 1404 residues: MKSLLDLFKQFTPDEHFDAIKIGMASPEKIRSWSFGEVKKPETINYRTFKPERDGLFCAKIFGPIKDYECLCGKYKRLKHRGVICEKCGVEVTQTKVRRERMGHIDLAAPCAHIWFLKSLPSRLGLVLDMTLRDIERVLYFEAYVVTDPGMTPLKKFSIMSEDDFDAKRKEYGDEYTAKMGAEGIKDLLEGLDLDIEIDKLRNDLTGSEIKIKKNAKRLKLMEGFKKSGIKPEWMVLDVLPVLPPDLRPLVPLDGGRFATSDLNDLYRRVINRNSRLRRLLELKAPEIIARNEKRMLQEAVDSLLDNGRRGKAMTGANKRALKSLADMIKGKSGRFRQNLLGKRVDYSGRSVITVGPTLKLHQCGLPKLMALELFKPFIFAQLEVRGIATTIKAAKKEVETGTPVVWDILEEVIKEHPVMLNRAPTLHRLGIQAFEPILIEGKAIQLHPLVCSAFNADFDGDQMAVHVPLSVEAQMEARTLMLASNNILFPANGEPSIVPSQDVVLGLYYTTRDRTNGKGEGLVFSDTGEVRRAFDAGELDLNARISVRLTEWSKDKETNEFVPSTKLWETTGGRALLSEILPKGLPFSNINKALKKKEISKLINVSFRKCGLKETVVFADKLLQSGFRLATKAGISICIEDMLVPKEKTSIIAHAQKEVKEIEQQYTSGLVTAGERYNKVVDIWGKSGDEVSKAMMAQLSKEKVIDRHGNLVEQDSFNSIYMMADSGARGSAAQIRQVAGMRGLMAKPDGSIIETPITANFREGLNVLEYFISTHGARKGLADTALKTANSGYLTRRLCDVVQDLVVTEDDCGTLDGSVMRAIVEGGEVIESLRDRVLGRTIVEDVLHPENRSVLIKAGVMLDEDLIEELEAAGVDEVKVRTALTCETRFGLCAKCYGRDLGRGGLINIGEAVGIIAAQSIGEPGTQLTMRTFHIGGAASRAAIASSVEAKSNGVIGFNAPMRYVTNGKGDLVVIARSGEIIIHDEHGRERERHKVPYGATLTVKIDQTIKAGAILANWDPLTRPIITEFAGKVQFENVEEGVTVAKQVDDVTGLSTLVVIDPKRRGATKVIRPQVKLIDATGNEVKIPGTDHSVTIGFQIGALVQVRDGQDVGPGEVLARIPIEGQKTRDITGGLPRVAELFEARTPKDKGTLAEMTGTVSFGKETKGKVRLQITDPEGKVWEDLVPKEKNILVHEGQVVNKGESIVDGPADPQDILRLLGVAELARYIVDEVQDVYRLQGVKINDKHIEVIVRQMLRRVVVENVGDTSYIAGEQVERSALLDVNDALRADGKIPATFSNLLLGITKASLSTDSFISAASFQETTRVLTEAAIMGKRDELRGLKENVIVGRLIPAGTGMAYHEARKAKDLMDDSERRAIAESEAAELEASQAETSDENAAAE.

Positions 70, 72, 85, and 88 each coordinate Zn(2+). 3 residues coordinate Mg(2+): D458, D460, and D462. Positions 813, 887, 894, and 897 each coordinate Zn(2+). Positions 1377–1404 (ERRAIAESEAAELEASQAETSDENAAAE) are disordered.

The protein belongs to the RNA polymerase beta' chain family. The RNAP catalytic core consists of 2 alpha, 1 beta, 1 beta' and 1 omega subunit. When a sigma factor is associated with the core the holoenzyme is formed, which can initiate transcription. The cofactor is Mg(2+). Zn(2+) serves as cofactor.

The catalysed reaction is RNA(n) + a ribonucleoside 5'-triphosphate = RNA(n+1) + diphosphate. DNA-dependent RNA polymerase catalyzes the transcription of DNA into RNA using the four ribonucleoside triphosphates as substrates. The polypeptide is DNA-directed RNA polymerase subunit beta' (Polaromonas naphthalenivorans (strain CJ2)).